The following is a 355-amino-acid chain: MRGNTALMSTLKRFGITTGATAAAASKASVIFLIKNETPKTVTIPTPIGLRLEISVGNYSRKESEFCASAKKFSGDNPDILDGLEIIACSGRSNSQTITITAEEGVGTITRPGLKGDVGDKSISPIAKQMIIDAVKEVVSSGVYVKLYVPKGEELAKNTMNPLVGVEGGISILGTTGIEYPVSDEDYIEHIKSEACVVKSTGHKTLVLAPGNTSFKFAREIYGDKVIKIGDNVGSSLKVAEELGFSQVILVSLPGKLVKVAAGMLNTHSKFGDARLETLTFSSVVAGISLEKIQKIVKSLSISEGLSYLTDEERQKVMKVVSDRALEKLKRVSKLKLGVVVISEDGKIMAKSGEV.

The protein belongs to the CbiD family.

The catalysed reaction is Co-precorrin-5B + S-adenosyl-L-methionine = Co-precorrin-6A + S-adenosyl-L-homocysteine. The protein operates within cofactor biosynthesis; adenosylcobalamin biosynthesis; cob(II)yrinate a,c-diamide from sirohydrochlorin (anaerobic route): step 6/10. Catalyzes the methylation of C-1 in cobalt-precorrin-5B to form cobalt-precorrin-6A. The protein is Cobalt-precorrin-5B C(1)-methyltransferase of Sulfolobus acidocaldarius (strain ATCC 33909 / DSM 639 / JCM 8929 / NBRC 15157 / NCIMB 11770).